The following is a 425-amino-acid chain: Tyrosine--tRNA ligase (425 aa).

Tyrosine 34 contributes to the L-tyrosine binding site. Positions 39-48 match the 'HIGH' region motif; sequence PTADSLHVGN. 2 residues coordinate L-tyrosine: tyrosine 171 and glutamine 175. The short motif at 231–235 is the 'KMSKS' region element; it reads KYGKS. Lysine 234 serves as a coordination point for ATP. An S4 RNA-binding domain is found at 358–424; it reads APLVELLVHA…GKRTYTVVKI (67 aa).

This sequence belongs to the class-I aminoacyl-tRNA synthetase family. TyrS type 1 subfamily. Homodimer.

The protein resides in the cytoplasm. The catalysed reaction is tRNA(Tyr) + L-tyrosine + ATP = L-tyrosyl-tRNA(Tyr) + AMP + diphosphate + H(+). Its function is as follows. Catalyzes the attachment of tyrosine to tRNA(Tyr) in a two-step reaction: tyrosine is first activated by ATP to form Tyr-AMP and then transferred to the acceptor end of tRNA(Tyr). The sequence is that of Tyrosine--tRNA ligase from Opitutus terrae (strain DSM 11246 / JCM 15787 / PB90-1).